We begin with the raw amino-acid sequence, 219 residues long: Small ribosomal subunit protein uS3 (219 aa).

Residues 38–106 form the KH type-2 domain; sequence IREYIENRLK…RVHINIFEVK (69 aa).

Belongs to the universal ribosomal protein uS3 family. As to quaternary structure, part of the 30S ribosomal subunit. Forms a tight complex with proteins S10 and S14.

Its function is as follows. Binds the lower part of the 30S subunit head. Binds mRNA in the 70S ribosome, positioning it for translation. The protein is Small ribosomal subunit protein uS3 of Halalkalibacterium halodurans (strain ATCC BAA-125 / DSM 18197 / FERM 7344 / JCM 9153 / C-125) (Bacillus halodurans).